The chain runs to 883 residues: Phosphoenolpyruvate carboxylase (883 aa).

Residues H138 and K546 contribute to the active site.

The protein belongs to the PEPCase type 1 family. The cofactor is Mg(2+).

The enzyme catalyses oxaloacetate + phosphate = phosphoenolpyruvate + hydrogencarbonate. In terms of biological role, forms oxaloacetate, a four-carbon dicarboxylic acid source for the tricarboxylic acid cycle. This chain is Phosphoenolpyruvate carboxylase, found in Klebsiella pneumoniae (strain 342).